Reading from the N-terminus, the 247-residue chain is Potassium channel Ftrac_2467 (247 aa).

6 helical membrane passes run 23 to 44 (TRIETFSDAVFALAITLLVLSS), 56 to 78 (SMRDVIPFAICVALIIVIWYQHY), 89 to 117 (KVTILLNTILLFVLLVYVYPLKFLARFLS), 142 to 165 (LKLLMVNYGLGAFAIFLVFSLMYW), 187 to 210 (SIIANLLMCSVPLLSLIITLIDPW), and 215 to 237 (TTILSGFLYFLYVPIMIVFGRIT). A RxxxFSD motif motif is present at residues 24-30 (RIETFSD).

Belongs to the TMEM175 family. Homotetramer.

The protein resides in the cell membrane. It catalyses the reaction K(+)(in) = K(+)(out). In terms of biological role, potassium channel; forms a potassium-permeable leak-like channel with weak selectivity for potassium. The channel is permeable for K(+), Rb(+) and Cs(+). In Marivirga tractuosa (strain ATCC 23168 / DSM 4126 / NBRC 15989 / NCIMB 1408 / VKM B-1430 / H-43) (Microscilla tractuosa), this protein is Potassium channel Ftrac_2467.